The sequence spans 621 residues: Nitrate reductase [NADH] 1 (621 aa).

A Cytochrome b5 heme-binding domain is found at 249-324; the sequence is GKEFTMSEVR…LDTYRIGELI (76 aa). Heme is bound by residues His-284 and His-307. The FAD-binding FR-type domain maps to 361-473; that stretch reads REKIHCRLVG…KGPLGHVEYT (113 aa). FAD is bound by residues 413–416, 430–432, Phe-435, 447–449, Ser-497, and Thr-500; these read RAYT, LVK, and LMT.

The protein belongs to the nitrate reductase family. In terms of assembly, homodimer. FAD serves as cofactor. Requires heme as cofactor. The cofactor is Mo-molybdopterin.

It carries out the reaction nitrite + NAD(+) + H2O = nitrate + NADH + H(+). Its function is as follows. Nitrate reductase is a key enzyme involved in the first step of nitrate assimilation in plants, fungi and bacteria. The polypeptide is Nitrate reductase [NADH] 1 (Zea mays (Maize)).